The following is a 247-amino-acid chain: Ribonuclease PH (247 aa).

Residues R87 and 125–127 (GTR) each bind phosphate.

This sequence belongs to the RNase PH family. Homohexameric ring arranged as a trimer of dimers.

It carries out the reaction tRNA(n+1) + phosphate = tRNA(n) + a ribonucleoside 5'-diphosphate. Functionally, phosphorolytic 3'-5' exoribonuclease that plays an important role in tRNA 3'-end maturation. Removes nucleotide residues following the 3'-CCA terminus of tRNAs; can also add nucleotides to the ends of RNA molecules by using nucleoside diphosphates as substrates, but this may not be physiologically important. Probably plays a role in initiation of 16S rRNA degradation (leading to ribosome degradation) during starvation. This Trichormus variabilis (strain ATCC 29413 / PCC 7937) (Anabaena variabilis) protein is Ribonuclease PH.